Here is a 633-residue protein sequence, read N- to C-terminus: Putative ankyrin repeat protein L774 (633 aa).

ANK repeat units follow at residues 91–120, 123–152, 221–250, 252–275, 338–367, 369–393, and 517–546; these read IYGHLYCLYIKNNRLDLCDYLIQSNYEYDP, NCDDILEFVPDENEADVLMYIINNNNFFKI, NVNKLLEIACIFSITEIVTHLLDIGTEYDF, TILKSHISLHILKIFLNRGNILDS, DYDVVMKKAIMNSSLDIIDYCISNGTDVNN, MTYAFQHYNQSCFTHLLNQGGTLST, and DNLKILFVAIMKYDIDMLKFLFEINDNSND.

The polypeptide is Putative ankyrin repeat protein L774 (Acanthamoeba polyphaga mimivirus (APMV)).